The primary structure comprises 326 residues: Glutamine synthetase (326 aa).

One can recognise a GS beta-grasp domain in the interval 4 to 85 (FKLEYIWLDG…VMCEVMMPDG (82 aa)). Residues 83–326 (PDGHAHASNA…GDPYQIVRRF (244 aa)) form the GS catalytic domain. The Mg(2+) site is built by E107 and E109. E164 provides a ligand contact to ATP. E169 and E176 together coordinate Mg(2+). E275 is a binding site for L-glutamate.

The protein belongs to the glutamine synthetase family. Homooctamer and homotetramer. It depends on Mg(2+) as a cofactor.

The protein localises to the cytoplasm. It carries out the reaction L-glutamate + NH4(+) + ATP = L-glutamine + ADP + phosphate + H(+). Its activity is regulated as follows. Transferase activity is inhibited by NH(4)Cl. Its function is as follows. Catalyzes the ATP-dependent biosynthesis of glutamine from glutamate and ammonia. The protein is Glutamine synthetase of Rhizobium leguminosarum bv. phaseoli.